A 475-amino-acid polypeptide reads, in one-letter code: Membrane-bound lytic murein transglycosylase F (475 aa).

The first 15 residues, 1–15 (MKKLLLILCCITLLA), serve as a signal peptide directing secretion. A non-LT domain region spans residues 16 to 258 (ACQKVVVEQE…HLNEKYFAHV (243 aa)). The interval 259-475 (KRFDYVDTRA…KTEAAQPQQP (217 aa)) is LT domain. E303 is an active-site residue.

In the N-terminal section; belongs to the bacterial solute-binding protein 3 family. It in the C-terminal section; belongs to the transglycosylase Slt family.

The protein resides in the cell outer membrane. It catalyses the reaction Exolytic cleavage of the (1-&gt;4)-beta-glycosidic linkage between N-acetylmuramic acid (MurNAc) and N-acetylglucosamine (GlcNAc) residues in peptidoglycan, from either the reducing or the non-reducing ends of the peptidoglycan chains, with concomitant formation of a 1,6-anhydrobond in the MurNAc residue.. Its function is as follows. Murein-degrading enzyme that degrades murein glycan strands and insoluble, high-molecular weight murein sacculi, with the concomitant formation of a 1,6-anhydromuramoyl product. Lytic transglycosylases (LTs) play an integral role in the metabolism of the peptidoglycan (PG) sacculus. Their lytic action creates space within the PG sacculus to allow for its expansion as well as for the insertion of various structures such as secretion systems and flagella. The protein is Membrane-bound lytic murein transglycosylase F of Shewanella halifaxensis (strain HAW-EB4).